The following is a 176-amino-acid chain: Nucleoside triphosphate/diphosphate phosphatase (176 aa).

R23 functions as the Proton donor in the catalytic mechanism. Residues N87, D103, D105, D107, D120, and E123 each contribute to the Mg(2+) site.

It belongs to the Ntdp family. The cofactor is Mg(2+).

The catalysed reaction is a ribonucleoside 5'-triphosphate + H2O = a ribonucleoside 5'-diphosphate + phosphate + H(+). It catalyses the reaction a ribonucleoside 5'-diphosphate + H2O = a ribonucleoside 5'-phosphate + phosphate + H(+). In terms of biological role, has nucleoside phosphatase activity towards nucleoside triphosphates and nucleoside diphosphates. The chain is Nucleoside triphosphate/diphosphate phosphatase from Bacillus cytotoxicus (strain DSM 22905 / CIP 110041 / 391-98 / NVH 391-98).